Reading from the N-terminus, the 479-residue chain is Nucleoside-diphosphatase uda-1 (479 aa).

The Cytoplasmic portion of the chain corresponds to 1–7 (MLFPAFS). A helical; Signal-anchor for type II membrane protein transmembrane segment spans residues 8 to 24 (ILLISFFSLLSVVTTKT). Residues 25 to 479 (QYWCHGDGVL…VLSYFNIISV (455 aa)) are Lumenal-facing. The active-site Proton acceptor is the E171. N-linked (GlcNAc...) asparagine glycans are attached at residues N300 and N452.

The protein belongs to the GDA1/CD39 NTPase family. Requires Ca(2+) as cofactor. Mg(2+) serves as cofactor. The cofactor is Mn(2+).

The protein localises to the endomembrane system. It catalyses the reaction a ribonucleoside 5'-diphosphate + H2O = a ribonucleoside 5'-phosphate + phosphate + H(+). In terms of biological role, hydrolyzes UDP and GDP but not any other nucleoside di-, mono- or triphosphates. May promote reglycosylation reactions involved in glycoproteins folding and quality control in the endoplasmic reticulum. The polypeptide is Nucleoside-diphosphatase uda-1 (uda-1) (Caenorhabditis elegans).